Here is a 115-residue protein sequence, read N- to C-terminus: Macrophage migration inhibitory factor (115 aa).

Pro2 (proton acceptor; via imino nitrogen) is an active-site residue. Residues Lys33 and Ile65 each contribute to the substrate site. Residue Lys78 is modified to N6-acetyllysine; alternate. Lys78 is modified (N6-succinyllysine; alternate). Asn98 provides a ligand contact to substrate.

It belongs to the MIF family. As to quaternary structure, homotrimer. Interacts with CXCR2 extracellular domain. Interacts with the CD74 extracellular domain, USO1, COPS5 and BNIPL.

Its subcellular location is the secreted. It localises to the cytoplasm. The enzyme catalyses 3-phenylpyruvate = enol-phenylpyruvate. It carries out the reaction L-dopachrome = 5,6-dihydroxyindole-2-carboxylate. Pro-inflammatory cytokine involved in the innate immune response to bacterial pathogens. The expression of MIF at sites of inflammation suggests a role as mediator in regulating the function of macrophages in host defense. Counteracts the anti-inflammatory activity of glucocorticoids. Has phenylpyruvate tautomerase and dopachrome tautomerase activity (in vitro), but the physiological substrate is not known. It is not clear whether the tautomerase activity has any physiological relevance, and whether it is important for cytokine activity. This is Macrophage migration inhibitory factor from Homo sapiens (Human).